Consider the following 421-residue polypeptide: UDP-N-acetylglucosamine 1-carboxyvinyltransferase (421 aa).

22-23 (KN) is a phosphoenolpyruvate binding site. Position 91 (Arg-91) interacts with UDP-N-acetyl-alpha-D-glucosamine. Cys-115 (proton donor) is an active-site residue. Cys-115 is modified (2-(S-cysteinyl)pyruvic acid O-phosphothioketal). UDP-N-acetyl-alpha-D-glucosamine contacts are provided by residues 120–124 (RPVDL), 160–163 (KVSV), Asp-305, and Ile-327.

The protein belongs to the EPSP synthase family. MurA subfamily.

It is found in the cytoplasm. It catalyses the reaction phosphoenolpyruvate + UDP-N-acetyl-alpha-D-glucosamine = UDP-N-acetyl-3-O-(1-carboxyvinyl)-alpha-D-glucosamine + phosphate. It participates in cell wall biogenesis; peptidoglycan biosynthesis. Its function is as follows. Cell wall formation. Adds enolpyruvyl to UDP-N-acetylglucosamine. This is UDP-N-acetylglucosamine 1-carboxyvinyltransferase from Photorhabdus laumondii subsp. laumondii (strain DSM 15139 / CIP 105565 / TT01) (Photorhabdus luminescens subsp. laumondii).